The sequence spans 545 residues: 2-succinyl-5-enolpyruvyl-6-hydroxy-3-cyclohexene-1-carboxylate synthase (545 aa).

Residues 170–185 (QVSGLQRSAPAPSSDS) show a composition bias toward polar residues. Residues 170–193 (QVSGLQRSAPAPSSDSPLGAAPQL) are disordered.

The protein belongs to the TPP enzyme family. MenD subfamily. As to quaternary structure, homodimer. Mg(2+) serves as cofactor. It depends on Mn(2+) as a cofactor. Thiamine diphosphate is required as a cofactor.

The enzyme catalyses isochorismate + 2-oxoglutarate + H(+) = 5-enolpyruvoyl-6-hydroxy-2-succinyl-cyclohex-3-ene-1-carboxylate + CO2. The protein operates within quinol/quinone metabolism; 1,4-dihydroxy-2-naphthoate biosynthesis; 1,4-dihydroxy-2-naphthoate from chorismate: step 2/7. It participates in cofactor biosynthesis; phylloquinone biosynthesis. Functionally, catalyzes the thiamine diphosphate-dependent decarboxylation of 2-oxoglutarate and the subsequent addition of the resulting succinic semialdehyde-thiamine pyrophosphate anion to isochorismate to yield 2-succinyl-5-enolpyruvyl-6-hydroxy-3-cyclohexene-1-carboxylate (SEPHCHC). The chain is 2-succinyl-5-enolpyruvyl-6-hydroxy-3-cyclohexene-1-carboxylate synthase from Parasynechococcus marenigrum (strain WH8102).